We begin with the raw amino-acid sequence, 197 residues long: Recombination protein RecR (197 aa).

Residues 56–71 form a C4-type zinc finger; sequence CQQCRNLSETEICGFC. Positions 79 to 174 constitute a Toprim domain; it reads DQLCIVETPT…SVTRLAQGIP (96 aa).

The protein belongs to the RecR family.

Its function is as follows. May play a role in DNA repair. It seems to be involved in an RecBC-independent recombinational process of DNA repair. It may act with RecF and RecO. The chain is Recombination protein RecR from Hydrogenovibrio crunogenus (strain DSM 25203 / XCL-2) (Thiomicrospira crunogena).